Reading from the N-terminus, the 295-residue chain is Acetyl-coenzyme A carboxylase carboxyl transferase subunit beta (295 aa).

Residues 1–20 form a disordered region; it reads MSWLSKLMPSGIRTENTPAK. In terms of domain architecture, CoA carboxyltransferase N-terminal spans 28–295; it reads LWEKCSNCGS…QPHPQDADAA (268 aa). Residues C32, C35, C51, and C54 each contribute to the Zn(2+) site. The C4-type zinc-finger motif lies at 32-54; sequence CSNCGSALYGPELEENLEVCPKC.

It belongs to the AccD/PCCB family. In terms of assembly, acetyl-CoA carboxylase is a heterohexamer composed of biotin carboxyl carrier protein (AccB), biotin carboxylase (AccC) and two subunits each of ACCase subunit alpha (AccA) and ACCase subunit beta (AccD). It depends on Zn(2+) as a cofactor.

It is found in the cytoplasm. It catalyses the reaction N(6)-carboxybiotinyl-L-lysyl-[protein] + acetyl-CoA = N(6)-biotinyl-L-lysyl-[protein] + malonyl-CoA. It participates in lipid metabolism; malonyl-CoA biosynthesis; malonyl-CoA from acetyl-CoA: step 1/1. Functionally, component of the acetyl coenzyme A carboxylase (ACC) complex. Biotin carboxylase (BC) catalyzes the carboxylation of biotin on its carrier protein (BCCP) and then the CO(2) group is transferred by the transcarboxylase to acetyl-CoA to form malonyl-CoA. This Xanthomonas campestris pv. campestris (strain 8004) protein is Acetyl-coenzyme A carboxylase carboxyl transferase subunit beta.